The following is a 734-amino-acid chain: Cleavage stimulation factor subunit 77 (734 aa).

HAT repeat units follow at residues 20 to 52 (SPIA…AQMA), 54 to 85 (NNDD…FIRK), 93 to 128 (EGQE…FLKS), 139 to 172 (HRKT…FENT), 198 to 237 (ERKK…FEKG), 246 to 278 (SSTK…WHVK), 280 to 312 (GSTD…MEES), 314 to 345 (GAIQ…FLRR), 347 to 379 (EGVE…MAFC), 382 to 414 (KEPK…FLTR), 416 to 450 (NDDR…FEQT), and 474 to 505 (EGSS…DLDH). Residues 637 to 734 (VKQSFAAKGN…FSGELSGSTG (98 aa)) are disordered. The segment covering 664–677 (LPRDRRATKRKDSD) has biased composition (basic and acidic residues). Positions 709 to 734 (ATSSQTPTGSTSYGSAFSGELSGSTG) are enriched in polar residues.

As to quaternary structure, homodimer. Belongs to the CSTF complex. Forms a complex with cleavage and polyadenylation specificity factor (CPSF) subunits CPSF30, CSTF64, PCFS1, PCFS5 and FIPS5.

It is found in the nucleus. Its function is as follows. One of the multiple factors required for polyadenylation and 3'-end cleavage of pre-mRNAs. Required for the targeted 3' processing of antisense transcripts that triggers transcriptional silencing of the corresponding sense gene. In Arabidopsis thaliana (Mouse-ear cress), this protein is Cleavage stimulation factor subunit 77.